Consider the following 726-residue polypeptide: Dipeptidyl-peptidase 5 (726 aa).

The signal sequence occupies residues 1 to 19 (MAPAKWLIASLAFASTGLA). Residues asparagine 96 and asparagine 252 are each glycosylated (N-linked (GlcNAc...) asparagine). The tract at residues 268-292 (VAEPINKRNGPRTPHGIEGASSSPV) is disordered. Asparagine 485 carries N-linked (GlcNAc...) asparagine glycosylation. The Charge relay system role is filled by serine 558. Asparagine 605 carries N-linked (GlcNAc...) asparagine glycosylation. Active-site charge relay system residues include aspartate 641 and histidine 673. An N-linked (GlcNAc...) asparagine glycan is attached at asparagine 699.

It belongs to the peptidase S9C family.

Its subcellular location is the secreted. Extracellular dipeptidyl-peptidase which removes N-terminal dipeptides sequentially from polypeptides having unsubstituted N-termini. Contributes to pathogenicity. The chain is Dipeptidyl-peptidase 5 (DPP5) from Arthroderma otae (Microsporum canis).